We begin with the raw amino-acid sequence, 335 residues long: Glucokinase (335 aa).

Position 11–16 (11–16 (ADIGGT)) interacts with ATP.

This sequence belongs to the bacterial glucokinase family.

Its subcellular location is the cytoplasm. The enzyme catalyses D-glucose + ATP = D-glucose 6-phosphate + ADP + H(+). The chain is Glucokinase from Xanthomonas campestris pv. campestris (strain B100).